A 372-amino-acid polypeptide reads, in one-letter code: Spermidine/putrescine import ATP-binding protein PotA (372 aa).

Residues 11 to 241 (IELRSIKKSY…PANLFVARFI (231 aa)) enclose the ABC transporter domain. Position 43 to 50 (43 to 50 (GPSGCGKT)) interacts with ATP.

The protein belongs to the ABC transporter superfamily. Spermidine/putrescine importer (TC 3.A.1.11.1) family. In terms of assembly, the complex is composed of two ATP-binding proteins (PotA), two transmembrane proteins (PotB and PotC) and a solute-binding protein (PotD).

It localises to the cell inner membrane. The catalysed reaction is ATP + H2O + polyamine-[polyamine-binding protein]Side 1 = ADP + phosphate + polyamineSide 2 + [polyamine-binding protein]Side 1.. Part of the ABC transporter complex PotABCD involved in spermidine/putrescine import. Responsible for energy coupling to the transport system. This Haemophilus influenzae (strain ATCC 51907 / DSM 11121 / KW20 / Rd) protein is Spermidine/putrescine import ATP-binding protein PotA.